A 237-amino-acid polypeptide reads, in one-letter code: Uridylate kinase (237 aa).

Position 12-15 (12-15 (KLSG)) interacts with ATP. The interval 20–25 (GEDGLG) is involved in allosteric activation by GTP. Glycine 54 contacts UMP. 2 residues coordinate ATP: glycine 55 and arginine 59. UMP is bound by residues aspartate 74 and 135 to 142 (TGNPFFTT). The ATP site is built by threonine 162, tyrosine 168, and aspartate 171.

The protein belongs to the UMP kinase family. As to quaternary structure, homohexamer.

The protein resides in the cytoplasm. It carries out the reaction UMP + ATP = UDP + ADP. It participates in pyrimidine metabolism; CTP biosynthesis via de novo pathway; UDP from UMP (UMPK route): step 1/1. Allosterically activated by GTP. Inhibited by UTP. Functionally, catalyzes the reversible phosphorylation of UMP to UDP. The protein is Uridylate kinase of Haemophilus influenzae (strain 86-028NP).